The chain runs to 291 residues: Tyrosine-protein kinase PtkA (291 aa).

Residues 1–79 form a disordered region; the sequence is MSSPRERRPA…RRASSPGESP (79 aa). Over residues 23-60 the composition is skewed to polar residues; sequence HQTSRSSPDTTAPTGSGLSNRFVNDNGIVTDTTASGTN. Tyrosine 262 carries the post-translational modification Phosphotyrosine.

The protein belongs to the HAD-like hydrolase superfamily. CbbY/CbbZ/Gph/YieH family. In terms of assembly, interacts with PtpA. In terms of processing, autophosphorylated.

The enzyme catalyses L-tyrosyl-[protein] + ATP = O-phospho-L-tyrosyl-[protein] + ADP + H(+). In terms of biological role, required for growth within macrophages. Catalyzes the phosphorylation of PtpA on the tyrosine residues at positions 128 and 129, thereby increasing PtpA phosphatase activity and promoting pathogenicity. This Mycobacterium bovis (strain ATCC BAA-935 / AF2122/97) protein is Tyrosine-protein kinase PtkA.